Consider the following 2319-residue polypeptide: AT-rich interactive domain-containing protein 1B (2319 aa).

Composition is skewed to low complexity over residues 1-21 (MAARAAAAAAAAAARARARAG) and 43-56 (GARGAAAAAAAPGP). Disordered regions lie at residues 1-74 (MAAR…VHHH), 155-306 (VGEA…GGGG), 321-414 (APAS…GAGA), 487-546 (RFAG…AGAA), 577-1062 (QQRS…LMNT), and 1085-1129 (DMMS…KITK). A2 is subject to N-acetylalanine. Gly residues predominate over residues 57-68 (MLGGGGDGGGGL). The span at 165–188 (QQHHHHHHAHHHHHHAHHLHHHHA) shows a compositional bias: basic residues. 2 stretches are compositionally biased toward low complexity: residues 189–215 (LQQQLNQFQQQQQQQQQQQQQQQQQQH) and 343–363 (SPGMGMMHSASAAAAGAPGSM). Residues 365–379 (PLQNSHEGYPNSQCN) show a composition bias toward polar residues. Residues 388 to 414 (GAGGGGGGGGGGGGGSGGGGGGGGAGA) are compositionally biased toward gly residues. Residue R487 is modified to Asymmetric dimethylarginine. The segment covering 489–510 (AGQNQHPSGATPTLNQLLTSPS) has biased composition (polar residues). Positions 502 to 506 (LNQLL) match the LXXLL motif. Residues 536 to 546 (PQSQAAAAGAA) show a composition bias toward low complexity. Phosphoserine is present on residues S585 and S599. R608 carries the post-translational modification Asymmetric dimethylarginine. Positions 620 to 630 (SQPQQSSPYPG) are enriched in low complexity. The residue at position 640 (R640) is an Asymmetric dimethylarginine. Composition is skewed to low complexity over residues 651–670 (GAMAGMQYPQQQMPPQYGQQ), 677–687 (QQGQQPYYSQQ), 695–712 (PQAQYLPSQSQQRYQPQQ), 767–783 (SSAVSASGSTSSQGDQS), 811–832 (GSPVGSNQSRSGPISPASIPGS), and 840–849 (GSQSESSSHP). A compositionally biased stretch (polar residues) spans 866-880 (TQRNPQMAQYGPQQT). Positions 881–892 (GPSMSPHPSPGG) are enriched in low complexity. Composition is skewed to polar residues over residues 899–923 (SSFQQSNSSGTYGPQMSQYGPQGNY) and 947–958 (SANNQMHGQGPS). 2 stretches are compositionally biased toward low complexity: residues 980 to 994 (PGNMSSMTPSSPGMS) and 1014 to 1028 (EAAAAVMQAAANSAQ). Residues 1029 to 1062 (SRQGSFPGMNQSGLMASSSPYSQPMNNSSSLMNT) are compositionally biased toward polar residues. The ARID domain occupies 1136-1227 (EPERKLWVDR…YLFAFECKIE (92 aa)). Disordered regions lie at residues 1230–1334 (EEPP…QQGM), 1346–1443 (EPNK…PNYK), 1475–1647 (NQYG…FLPS), and 1782–1852 (DHNA…KQAS). Composition is skewed to polar residues over residues 1254–1273 (ANSGSLQGPQTPQSTGSNSM) and 1287–1304 (STPHGQMTPMQGGRSSTI). Positions 1305–1319 (SVHDPFSDVSDSSFP) are enriched in low complexity. Composition is skewed to polar residues over residues 1320-1334 (KRNSMTPNAPYQQGM) and 1364-1388 (PFMTQGQMPNSSMQDMYNQSPSGAM). The span at 1426–1440 (PPYGGHQPGLYPQQP) shows a compositional bias: low complexity. The Nuclear localization signal signature appears at 1441–1460 (NYKRHMDGMYGPPAKRHEGD). Polar residues-rich tracts occupy residues 1522-1534 (LQSSSSEGPQQNM) and 1579-1601 (ESQWPSHVSQRQPYMSSSASMQP). S1625, S1638, and S1642 each carry phosphoserine. A compositionally biased stretch (polar residues) spans 1627 to 1641 (ASFQRSLENRMSPSK). The span at 1782–1791 (DHNAARKDDS) shows a compositional bias: basic and acidic residues. At S1798 the chain carries Phosphoserine. Residues 1799 to 1823 (GKEEEDAECIDDDEEDEEDEEEDSE) are compositionally biased toward acidic residues. Residues 1842-1852 (ADPKEKPKQAS) show a composition bias toward basic and acidic residues. The residue at position 1860 (K1860) is an N6-acetyllysine. Disordered regions lie at residues 1904–1941 (FESKMEIPPRRRPPPPLSSAGRKKEQEGKGDSEEQQEK) and 1954–1973 (RPGALPEDANPGPQTESSKF). The segment covering 1925–1940 (RKKEQEGKGDSEEQQE) has biased composition (basic and acidic residues). The short motif at 2119–2123 (LDGLL) is the LXXLL element.

Component of SWI/SNF chromatin remodeling complexes, in some of which it can be mutually exclusive with ARID1B/BAF250B. The canonical complex contains a catalytic subunit (either SMARCA4/BRG1/BAF190A or SMARCA2/BRM/BAF190B) and at least SMARCE1, ACTL6A/BAF53, SMARCC1/BAF155, SMARCC2/BAF170, and SMARCB1/SNF5/BAF47. Other subunits specific to each of the complexes may also be present permitting several possible combinations developmentally and tissue specific. Component of the BAF (SWI/SNF-A) complex, which includes at least actin (ACTB), ARID1A/BAF250A, ARID1B/BAF250B, SMARCA2/BRM, SMARCA4/BRG1/BAF190A, ACTL6A/BAF53, ACTL6B/BAF53B, SMARCE1/BAF57, SMARCC1/BAF155, SMARCC2/BAF170, SMARCB1/SNF5/INI1, and one or more SMARCD1/BAF60A, SMARCD2/BAF60B, or SMARCD3/BAF60C. In muscle cells, the BAF complex also contains DPF3. Component of neural progenitors-specific chromatin remodeling complex (npBAF complex) composed of at least, ARID1A/BAF250A or ARID1B/BAF250B, SMARCD1/BAF60A, SMARCD3/BAF60C, SMARCA2/BRM/BAF190B, SMARCA4/BRG1/BAF190A, SMARCB1/BAF47, SMARCC1/BAF155, SMARCE1/BAF57, SMARCC2/BAF170, PHF10/BAF45A, ACTL6A/BAF53A and actin. Component of neuron-specific chromatin remodeling complex (nBAF complex) composed of at least, ARID1A/BAF250A or ARID1B/BAF250B, SMARCD1/BAF60A, SMARCD3/BAF60C, SMARCA2/BRM/BAF190B, SMARCA4/BRG1/BAF190A, SMARCB1/BAF47, SMARCC1/BAF155, SMARCE1/BAF57, SMARCC2/BAF170, DPF1/BAF45B, DPF3/BAF45C, ACTL6B/BAF53B and actin. Component of a SWI/SNF-like EBAFb complex, at least composed of SMARCA4/BRG1/BAF190A, SMARCB1/BAF47/SNF5, ACTL6A/BAF53A, SMARCE1/BAF57, SMARCD1/BAF60A, SMARCD2/BAF60B, SMARCC1/BAF155, SMARCC2/BAF170, ARID1B/BAF250B, MLLT1/ENL and actin. Interacts through its C-terminus with SMARCA2/BRM/BAF190B and SMARCA4/BRG1/BAF190A. Interacts with SMARCC1/BAF155. Widely expressed with high levels in heart, skeletal muscle and kidney.

It is found in the nucleus. Involved in transcriptional activation and repression of select genes by chromatin remodeling (alteration of DNA-nucleosome topology). Component of SWI/SNF chromatin remodeling complexes that carry out key enzymatic activities, changing chromatin structure by altering DNA-histone contacts within a nucleosome in an ATP-dependent manner. Belongs to the neural progenitors-specific chromatin remodeling complex (npBAF complex) and the neuron-specific chromatin remodeling complex (nBAF complex). During neural development a switch from a stem/progenitor to a postmitotic chromatin remodeling mechanism occurs as neurons exit the cell cycle and become committed to their adult state. The transition from proliferating neural stem/progenitor cells to postmitotic neurons requires a switch in subunit composition of the npBAF and nBAF complexes. As neural progenitors exit mitosis and differentiate into neurons, npBAF complexes which contain ACTL6A/BAF53A and PHF10/BAF45A, are exchanged for homologous alternative ACTL6B/BAF53B and DPF1/BAF45B or DPF3/BAF45C subunits in neuron-specific complexes (nBAF). The npBAF complex is essential for the self-renewal/proliferative capacity of the multipotent neural stem cells. The nBAF complex along with CREST plays a role regulating the activity of genes essential for dendrite growth. Binds DNA non-specifically. The polypeptide is AT-rich interactive domain-containing protein 1B (Homo sapiens (Human)).